The sequence spans 357 residues: Peptide chain release factor 1 (357 aa).

The residue at position 234 (glutamine 234) is an N5-methylglutamine. Basic and acidic residues predominate over residues 284 to 307 (KKQEQRSNDRKQQVGSGDRSERIR). The segment at 284-313 (KKQEQRSNDRKQQVGSGDRSERIRTYNFPQ) is disordered.

The protein belongs to the prokaryotic/mitochondrial release factor family. In terms of processing, methylated by PrmC. Methylation increases the termination efficiency of RF1.

The protein localises to the cytoplasm. Its function is as follows. Peptide chain release factor 1 directs the termination of translation in response to the peptide chain termination codons UAG and UAA. The protein is Peptide chain release factor 1 of Borrelia turicatae (strain 91E135).